A 286-amino-acid polypeptide reads, in one-letter code: ATP phosphoribosyltransferase (286 aa).

It belongs to the ATP phosphoribosyltransferase family. Long subfamily. The cofactor is Mg(2+).

The protein resides in the cytoplasm. The enzyme catalyses 1-(5-phospho-beta-D-ribosyl)-ATP + diphosphate = 5-phospho-alpha-D-ribose 1-diphosphate + ATP. It participates in amino-acid biosynthesis; L-histidine biosynthesis; L-histidine from 5-phospho-alpha-D-ribose 1-diphosphate: step 1/9. Its activity is regulated as follows. Feedback inhibited by histidine. Catalyzes the condensation of ATP and 5-phosphoribose 1-diphosphate to form N'-(5'-phosphoribosyl)-ATP (PR-ATP). Has a crucial role in the pathway because the rate of histidine biosynthesis seems to be controlled primarily by regulation of HisG enzymatic activity. The polypeptide is ATP phosphoribosyltransferase (Cytophaga hutchinsonii (strain ATCC 33406 / DSM 1761 / CIP 103989 / NBRC 15051 / NCIMB 9469 / D465)).